A 368-amino-acid chain; its full sequence is Putative J domain-containing protein R445 (368 aa).

Residues 13-83 (DLYKILGLTN…KQRNEYNQRL (71 aa)) enclose the J domain.

The protein is Putative J domain-containing protein R445 of Acanthamoeba polyphaga mimivirus (APMV).